Reading from the N-terminus, the 199-residue chain is Recombination protein RecR (199 aa).

The C4-type zinc finger occupies 57-72; sequence CQSCRTYTEESLCPIC. The Toprim domain occupies 81–176; that stretch reads STICVVETPA…VISRIAHGVP (96 aa).

Belongs to the RecR family.

Its function is as follows. May play a role in DNA repair. It seems to be involved in an RecBC-independent recombinational process of DNA repair. It may act with RecF and RecO. The sequence is that of Recombination protein RecR from Shewanella sp. (strain MR-4).